Here is a 197-residue protein sequence, read N- to C-terminus: MSEVKLAAEPRTEFGKGAARRIRRESKVPAVVYGHGAEPVHITLPGHELLLALRTPNVLLSLDIEGKAQLAIPKAVQRDAIKGFLEHVDLLLVRSGEKVNVEVYVHTEGDLAPGAYLLEHVLSTLTVEAEATHIPESVTVSIEGLEAGASILAKDIPLPSGTTLAIDEDAVVLQVLAAQAEEAAEEAAGTAEVGSEA.

Belongs to the bacterial ribosomal protein bL25 family. CTC subfamily. As to quaternary structure, part of the 50S ribosomal subunit; part of the 5S rRNA/L5/L18/L25 subcomplex. Contacts the 5S rRNA. Binds to the 5S rRNA independently of L5 and L18.

In terms of biological role, this is one of the proteins that binds to the 5S RNA in the ribosome where it forms part of the central protuberance. This is Large ribosomal subunit protein bL25 from Streptomyces avermitilis (strain ATCC 31267 / DSM 46492 / JCM 5070 / NBRC 14893 / NCIMB 12804 / NRRL 8165 / MA-4680).